A 356-amino-acid chain; its full sequence is A-type ATP synthase subunit C (356 aa).

It belongs to the V-ATPase V0D/AC39 subunit family. Has multiple subunits with at least A(3), B(3), C, D, E, F, H, I and proteolipid K(x).

The protein resides in the cell membrane. Its function is as follows. Component of the A-type ATP synthase that produces ATP from ADP in the presence of a proton gradient across the membrane. The protein is A-type ATP synthase subunit C of Thermoplasma acidophilum (strain ATCC 25905 / DSM 1728 / JCM 9062 / NBRC 15155 / AMRC-C165).